Consider the following 165-residue polypeptide: Growth arrest and DNA damage-inducible protein GADD45 alpha (165 aa).

At threonine 2 the chain carries Phosphothreonine.

This sequence belongs to the GADD45 family. In terms of assembly, interacts with AURKA, GADD45GIP1 and PCNA. Interacts with MAPK14.

The protein localises to the nucleus. Might affect PCNA interaction with some CDK (cell division protein kinase) complexes; stimulates DNA excision repair in vitro and inhibits entry of cells into S phase. In T-cells, functions as a regulator of p38 MAPKs by inhibiting p88 phosphorylation and activity. The protein is Growth arrest and DNA damage-inducible protein GADD45 alpha (Gadd45a) of Mus musculus (Mouse).